An 888-amino-acid chain; its full sequence is MSEKLYNYDVDPVETNDWVQSIESVIREEGLERAKFLIEKILKKSKITRANFFKCFFTSDYINTISSEEEVEYPGDLILEKRIRSAIRWNAIMMVLRASKKDLELGGHLSSFQSSATIYEVCFNHFFRSKNDEDGGDLVYFQGHIAPGIYARSFLEGRLSKKQIDNFRQEVDGKGLSSYPHPKLMPNFWQFPTVSMGLGPLCAIYQAKFLKYLQNRELKNTSKQTVYAFLGDGEMDEPESKGAISIAVREKLDNLIFVINCNLQRLDGPVVGNGKIVNELESFFYGAGWKVIKVIWGGKWDSLLKKDKTGKLIQLMNETIDGEYQTLKSKDGAYVRKYFFGKYQETLELVKNMTDEEIWNLNRGGHDPKKMFNALKKAKEIKDKPTVILAHTVKGYGMGVIAEGKNIAHQIKKININGIIYIRDRFNIPISNEDIKELPYVVFEKNSKEYCYMHQQRKKLGGYIPFRLSKFTNALNIPDLIDFKSLLKEQNKKMSTTIAFVRVLNLILKNHSIKNLIVPIIADEARTFGMEGLFRMIGIYSSIGQKYVPQDREQLAYYKEEKKGQILQEGINELGAASSWLAAATSYSTNDFPMIPFYIYYSIFGFQRIGDLFWAAGDQQARGFLIGGTSGRTTLNGEGLQHEDGHSHIQSLTIPNCVSYDPAFAYEVAVIIQDGLRRMYGPLQENIYYYITTINENYYMPAMPQGVEKGICKGIYKLKTFYATELKVQLMGSGAILRCICKAGEILSNDYCITTDIYSVTSFTELARNGEDCERWNMLHPYEKKRIAYIKTVMNSSPAVAATDYMKLFAEQIRHYIPSNEYHVLGTDGFGRSDSRDKLRDHFEVSAYYIVVAALNLLAKLNNINKKVVEEAIIKFNINADKINPRLA.

As to quaternary structure, homodimer. Part of the PDH complex, consisting of multiple copies of pyruvate dehydrogenase (E1), dihydrolipoamide acetyltransferase (E2) and lipoamide dehydrogenase (E3). Thiamine diphosphate is required as a cofactor.

The enzyme catalyses N(6)-[(R)-lipoyl]-L-lysyl-[protein] + pyruvate + H(+) = N(6)-[(R)-S(8)-acetyldihydrolipoyl]-L-lysyl-[protein] + CO2. Component of the pyruvate dehydrogenase (PDH) complex, that catalyzes the overall conversion of pyruvate to acetyl-CoA and CO(2). The protein is Pyruvate dehydrogenase E1 component (aceE) of Buchnera aphidicola subsp. Schizaphis graminum (strain Sg).